Reading from the N-terminus, the 699-residue chain is Receptor-type tyrosine-protein phosphatase epsilon (699 aa).

An N-terminal signal peptide occupies residues 1 to 22 (MEPFCPLLLASFSLSLATAGQG). A compositionally biased stretch (low complexity) spans 20 to 36 (GQGNDTTPTESNWTSTT). Residues 20–41 (GQGNDTTPTESNWTSTTAGPPD) form a disordered region. N-linked (GlcNAc...) asparagine glycosylation is found at N23 and N31. Over 23–47 (NDTTPTESNWTSTTAGPPDPGTSQP) the chain is Extracellular. A helical transmembrane segment spans residues 48-68 (LLTWLLLPLLLLLFLLAAYFF). Over 69 to 699 (RFRKQRKAVV…DIFSDYANFK (631 aa)) the chain is Cytoplasmic. Tyrosine-protein phosphatase domains follow at residues 134-393 (FREE…LLEY) and 425-688 (LEEE…VQDF). Substrate contacts are provided by residues D302, 334–340 (CSAGVGR), and Q378. The Phosphocysteine intermediate role is filled by C334. The Phosphocysteine intermediate role is filled by C629. At Y695 the chain carries Phosphotyrosine.

This sequence belongs to the protein-tyrosine phosphatase family. Receptor class 4 subfamily. As to quaternary structure, monomer. Isoform 2: Homodimer. Can form oligomers. Dimerization is increased by oxidative stress and decreased by EGFR. Isoform 2 interacts with GRB2. Post-translationally, a catalytically active cytoplasmic form (p65) is produced by proteolytic cleavage of either isoform 1, isoform 2 or isoform 3. In terms of processing, isoform 1 and isoform 2 are phosphorylated on tyrosine residues by tyrosine kinase Neu. N-glycosylated. As to expression, isoform 1 is highly expressed in the brain, lung, spleen and testis. Isoform 2 is highly expressed in thymus, spleen and lung. Isoform 1 and isoform 2 are expressed in primary hepatocytes.

The protein resides in the cell membrane. It is found in the cytoplasm. It catalyses the reaction O-phospho-L-tyrosyl-[protein] + H2O = L-tyrosyl-[protein] + phosphate. Functionally, isoform 1 plays a critical role in signaling transduction pathways and phosphoprotein network topology in red blood cells. May play a role in osteoclast formation and function. Acts as a negative regulator of insulin receptor (IR) signaling and is involved in insulin-induced glucose metabolism mainly through direct dephosphorylation and inactivation of IR in hepatocytes and liver. Isoform 2 acts as a negative regulator of insulin receptor (IR) signaling in skeletal muscle. Regulates insulin-induced tyrosine phosphorylation of insulin receptor (IR) and insulin receptor substrate 1 (IRS-1), phosphorylation of protein kinase B and glycogen synthase kinase-3 and insulin induced stimulation of glucose uptake. Its function is as follows. Isoform 1 and isoform 2 act as a negative regulator of FceRI-mediated signal transduction leading to cytokine production and degranulation, most likely by acting at the level of SYK to affect downstream events such as phosphorylation of SLP76 and LAT and mobilization of Ca(2+). This Rattus norvegicus (Rat) protein is Receptor-type tyrosine-protein phosphatase epsilon (Ptpre).